The sequence spans 291 residues: ATP synthase gamma chain (291 aa).

The protein belongs to the ATPase gamma chain family. As to quaternary structure, F-type ATPases have 2 components, CF(1) - the catalytic core - and CF(0) - the membrane proton channel. CF(1) has five subunits: alpha(3), beta(3), gamma(1), delta(1), epsilon(1). CF(0) has three main subunits: a, b and c.

It is found in the cell inner membrane. Functionally, produces ATP from ADP in the presence of a proton gradient across the membrane. The gamma chain is believed to be important in regulating ATPase activity and the flow of protons through the CF(0) complex. The polypeptide is ATP synthase gamma chain (Rhodopseudomonas palustris (strain HaA2)).